The following is an 82-amino-acid chain: Small ribosomal subunit protein bS16 (82 aa).

The protein belongs to the bacterial ribosomal protein bS16 family.

In Francisella tularensis subsp. tularensis (strain FSC 198), this protein is Small ribosomal subunit protein bS16.